The following is a 280-amino-acid chain: uncharacterized protein (280 aa).

Basic and acidic residues-rich tracts occupy residues 110–122 (EKQA…ERLQ), 167–177 (ATGEERAECGR), 223–261 (ARQH…RPQQ), and 269–280 (DVDRSKSCLEAE). 3 disordered regions span residues 110 to 137 (EKQA…KTEH), 151 to 177 (HRGE…ECGR), and 219 to 280 (TIID…LEAE).

This is an uncharacterized protein from Agrobacterium vitis (Rhizobium vitis).